We begin with the raw amino-acid sequence, 112 residues long: Nitrogen regulatory protein P-II (112 aa).

Ser-49 is subject to Phosphoserine. O-UMP-tyrosine is present on Tyr-51.

Belongs to the P(II) protein family. As to quaternary structure, homotrimer. In terms of processing, phosphorylation dependent on the nitrogen source and spectral light quality.

Functionally, P-II indirectly controls the transcription of the GS gene (glnA). P-II prevents NR-II-catalyzed conversion of NR-I to NR-I-phosphate, the transcriptional activator of glnA. When P-II is phosphorylated, these events are reversed. In nitrogen-limiting conditions, when the ratio of Gln to 2-ketoglutarate decreases, P-II is phosphorylated which allows the deadenylation of glutamine synthetase (GS), thus activating the enzyme. This is Nitrogen regulatory protein P-II (glnB) from Microchaete diplosiphon (Fremyella diplosiphon).